We begin with the raw amino-acid sequence, 425 residues long: COP9 signalosome complex subunit 1 (425 aa).

One can recognise a PCI domain in the interval 219 to 379 (ASSGVPPEIY…KSKALQTLEN (161 aa)).

It belongs to the CSN1 family. In terms of assembly, component of the COP9 signalosome (CSN) complex.

It is found in the cytoplasm. The protein localises to the nucleus. Component of the COP9 signalosome (CSN) complex that acts as an regulator of the ubiquitin (Ubl) conjugation pathway by mediating the deneddylation of the cullin subunit of SCF-type E3 ubiquitin-protein ligase complexes. The CSN complex is involved in the regulation of the circadian clock through its control of the stability of the SCF(FWD-1) complex. In Neurospora crassa (strain ATCC 24698 / 74-OR23-1A / CBS 708.71 / DSM 1257 / FGSC 987), this protein is COP9 signalosome complex subunit 1 (csn-1).